A 251-amino-acid polypeptide reads, in one-letter code: MTEAQRHQILLEMLAQLGFVTVEKVVERLGISPATARRDINKLDESGKLKKVRNGAEAITQQRPRWTPMNLHQAQNHDEKVRIAKAASQLVNPGESVVINCGSTAFLLGQEMCGKPVQIITNYLPLANYLIDQEHDSVIIMGGQYNKSQSITLSPQGSENSLYAGHWMFTSSKGLTAEGLYKTDMLTAMAEQKMLSVVGKLVVLVDSSKIGERAGMLFSRADQIDMLITGKNANPETLQQLEAQGVSILRV.

The 56-residue stretch at 3-58 (EAQRHQILLEMLAQLGFVTVEKVVERLGISPATARRDINKLDESGKLKKVRNGAEA) folds into the HTH deoR-type domain. Residues 20-39 (VTVEKVVERLGISPATARRD) constitute a DNA-binding region (H-T-H motif).

Its subcellular location is the cytoplasm. Its function is as follows. Represses ulaG and the ulaABCDEF operon. This is HTH-type transcriptional regulator UlaR from Shigella dysenteriae serotype 1 (strain Sd197).